The following is a 345-amino-acid chain: Methionine import ATP-binding protein MetN (345 aa).

The region spanning 2–241 (IKLNNIXKIF…PKTELAQEFI (240 aa)) is the ABC transporter domain. Position 38–45 (38–45 (GASGAGKS)) interacts with ATP.

It belongs to the ABC transporter superfamily. Methionine importer (TC 3.A.1.24) family. As to quaternary structure, the complex is composed of two ATP-binding proteins (MetN), two transmembrane proteins (MetI) and a solute-binding protein (MetQ).

The protein localises to the cell inner membrane. It carries out the reaction L-methionine(out) + ATP + H2O = L-methionine(in) + ADP + phosphate + H(+). The catalysed reaction is D-methionine(out) + ATP + H2O = D-methionine(in) + ADP + phosphate + H(+). Its function is as follows. Part of the ABC transporter complex MetNIQ involved in methionine import. Responsible for energy coupling to the transport system. This is Methionine import ATP-binding protein MetN from Haemophilus influenzae (strain ATCC 51907 / DSM 11121 / KW20 / Rd).